We begin with the raw amino-acid sequence, 754 residues long: Phosphatase and actin regulator 4B (754 aa).

Positions 1–12 (MENRDDEVEHQH) are enriched in basic and acidic residues. 4 disordered regions span residues 1-38 (MENR…FSTL), 83-105 (KELP…KNGH), 120-625 (VHSP…SKEQ), and 637-666 (LTRR…DRQA). An RPEL 1 repeat occupies 61-86 (EVLERKMSMRRPRQELIEQGVLKELP). 3 stretches are compositionally biased toward basic and acidic residues: residues 138–153 (PEDR…DHRG), 184–221 (HGED…EPDW), and 229–241 (SSVE…RESD). Composition is skewed to low complexity over residues 296–307 (SFCSSNSSSSSS) and 316–333 (SSAG…LTTS). Composition is skewed to pro residues over residues 348 to 357 (KQPPMPPPKP), 381 to 390 (KPSPPMPPKR), 427 to 445 (LPPP…PSPP), and 460 to 478 (YPLP…PPED). Acidic residues-rich tracts occupy residues 483–503 (DEDD…DEEP), 541–557 (SEEE…ESDS), and 566–576 (DESDEDEEDDS). Over residues 605 to 615 (QAPERQAKSEH) the composition is skewed to basic and acidic residues. RPEL repeat units lie at residues 635 to 660 (TALT…QPKN) and 673 to 698 (RRLT…RFHE). At serine 642 the chain carries Phosphoserine.

This sequence belongs to the phosphatase and actin regulator family. As to quaternary structure, binds ppp1ca and actin.

It localises to the cytoplasm. It is found in the cell projection. The protein localises to the lamellipodium. Regulator of protein phosphatase 1 (PP1) required for neural tube and optic fissure closure, and enteric neural crest cell (ENCCs) migration during development. Acts as an activator of PP1. During neural tube closure, localizes to the ventral neural tube and activates PP1, leading to down-regulate cell proliferation within cranial neural tissue and the neural retina. Also acts as a regulator of migration of enteric neural crest cells (ENCCs) by activating PP1, leading to repression of the integrin signaling through the rho/rock pathway. The sequence is that of Phosphatase and actin regulator 4B (phactr4b) from Danio rerio (Zebrafish).